Consider the following 195-residue polypeptide: CDP-diacylglycerol--glycerol-3-phosphate 3-phosphatidyltransferase (195 aa).

4 consecutive transmembrane segments (helical) span residues 7 to 24 (ITVL…LFYL), 60 to 81 (FGAF…VLLV), 134 to 150 (MLAL…FTFW), and 157 to 173 (FLLI…LQYL).

The protein belongs to the CDP-alcohol phosphatidyltransferase class-I family.

It is found in the cell membrane. It catalyses the reaction a CDP-1,2-diacyl-sn-glycerol + sn-glycerol 3-phosphate = a 1,2-diacyl-sn-glycero-3-phospho-(1'-sn-glycero-3'-phosphate) + CMP + H(+). Its pathway is phospholipid metabolism; phosphatidylglycerol biosynthesis; phosphatidylglycerol from CDP-diacylglycerol: step 1/2. Functionally, this protein catalyzes the committed step to the synthesis of the acidic phospholipids. The sequence is that of CDP-diacylglycerol--glycerol-3-phosphate 3-phosphatidyltransferase (pgsA) from Pseudomonas fluorescens.